A 273-amino-acid chain; its full sequence is Dermonecrotic toxin LdSicTox-alphaIB3aiii (273 aa).

His5 is an active-site residue. The Mg(2+) site is built by Glu25 and Asp27. The Nucleophile role is filled by His41. 2 disulfides stabilise this stretch: Cys45-Cys51 and Cys47-Cys190. Asp85 serves as a coordination point for Mg(2+).

It belongs to the arthropod phospholipase D family. Class II subfamily. Mg(2+) serves as cofactor. As to expression, expressed by the venom gland.

Its subcellular location is the secreted. The catalysed reaction is an N-(acyl)-sphingosylphosphocholine = an N-(acyl)-sphingosyl-1,3-cyclic phosphate + choline. It carries out the reaction an N-(acyl)-sphingosylphosphoethanolamine = an N-(acyl)-sphingosyl-1,3-cyclic phosphate + ethanolamine. The enzyme catalyses a 1-acyl-sn-glycero-3-phosphocholine = a 1-acyl-sn-glycero-2,3-cyclic phosphate + choline. It catalyses the reaction a 1-acyl-sn-glycero-3-phosphoethanolamine = a 1-acyl-sn-glycero-2,3-cyclic phosphate + ethanolamine. Functionally, dermonecrotic toxins cleave the phosphodiester linkage between the phosphate and headgroup of certain phospholipids (sphingolipid and lysolipid substrates), forming an alcohol (often choline) and a cyclic phosphate. This toxin acts on sphingomyelin (SM). It may also act on ceramide phosphoethanolamine (CPE), lysophosphatidylcholine (LPC) and lysophosphatidylethanolamine (LPE), but not on lysophosphatidylserine (LPS), and lysophosphatidylglycerol (LPG). It acts by transphosphatidylation, releasing exclusively cyclic phosphate products as second products. Induces dermonecrosis, hemolysis, increased vascular permeability, edema, inflammatory response, and platelet aggregation. The protein is Dermonecrotic toxin LdSicTox-alphaIB3aiii of Loxosceles deserta (Desert recluse spider).